Reading from the N-terminus, the 995-residue chain is S1 RNA-binding domain-containing protein 1 (995 aa).

Residues 23–78 are disordered; it reads SFSELSSASEEDDKEDSAWEPQKKVPRSRKQPPPKESKPKRMPQVKKNAPQISDGS. Residue K84 forms a Glycyl lysine isopeptide (Lys-Gly) (interchain with G-Cter in SUMO2) linkage. The span at 116–132 shows a compositional bias: basic residues; the sequence is TKRKCAAQPHAVRRTKK. Positions 116-164 are disordered; that stretch reads TKRKCAAQPHAVRRTKKLKVDEETSKASYLEGESNSSETPSTSTVWGGT. A Glycyl lysine isopeptide (Lys-Gly) (interchain with G-Cter in SUMO2) cross-link involves residue K134. A compositionally biased stretch (low complexity) spans 146–159; it reads EGESNSSETPSTST. Residues K166, K167, and K183 each participate in a glycyl lysine isopeptide (Lys-Gly) (interchain with G-Cter in SUMO2) cross-link. Residue K185 forms a Glycyl lysine isopeptide (Lys-Gly) (interchain with G-Cter in SUMO1); alternate linkage. K185 is covalently cross-linked (Glycyl lysine isopeptide (Lys-Gly) (interchain with G-Cter in SUMO2); alternate). Residues 258 to 288 adopt a coiled-coil conformation; it reads ADSLREVQQTLEELRAVAKKVHSTIQKIKKE. S861 is modified (phosphoserine). In terms of domain architecture, S1 motif spans 919-992; the sequence is GTVLTGKVEN…PRSRITLDLI (74 aa). K955 participates in a covalent cross-link: Glycyl lysine isopeptide (Lys-Gly) (interchain with G-Cter in SUMO2). S964 carries the post-translational modification Phosphoserine.

This Pongo abelii (Sumatran orangutan) protein is S1 RNA-binding domain-containing protein 1 (SRBD1).